The primary structure comprises 360 residues: UDP-N-acetylglucosamine--N-acetylmuramyl-(pentapeptide) pyrophosphoryl-undecaprenol N-acetylglucosamine transferase (360 aa).

UDP-N-acetyl-alpha-D-glucosamine-binding positions include Thr-13 to Gly-15, Asn-125, Arg-164, Ser-191, and Gln-290.

The protein belongs to the glycosyltransferase 28 family. MurG subfamily.

The protein resides in the cell inner membrane. It catalyses the reaction di-trans,octa-cis-undecaprenyl diphospho-N-acetyl-alpha-D-muramoyl-L-alanyl-D-glutamyl-meso-2,6-diaminopimeloyl-D-alanyl-D-alanine + UDP-N-acetyl-alpha-D-glucosamine = di-trans,octa-cis-undecaprenyl diphospho-[N-acetyl-alpha-D-glucosaminyl-(1-&gt;4)]-N-acetyl-alpha-D-muramoyl-L-alanyl-D-glutamyl-meso-2,6-diaminopimeloyl-D-alanyl-D-alanine + UDP + H(+). It functions in the pathway cell wall biogenesis; peptidoglycan biosynthesis. In terms of biological role, cell wall formation. Catalyzes the transfer of a GlcNAc subunit on undecaprenyl-pyrophosphoryl-MurNAc-pentapeptide (lipid intermediate I) to form undecaprenyl-pyrophosphoryl-MurNAc-(pentapeptide)GlcNAc (lipid intermediate II). This is UDP-N-acetylglucosamine--N-acetylmuramyl-(pentapeptide) pyrophosphoryl-undecaprenol N-acetylglucosamine transferase from Hahella chejuensis (strain KCTC 2396).